We begin with the raw amino-acid sequence, 301 residues long: Lipoyl synthase (301 aa).

[4Fe-4S] cluster is bound by residues Cys-37, Cys-42, Cys-48, Cys-63, Cys-67, Cys-70, and Ser-276. Residues 49–265 enclose the Radical SAM core domain; it reads WSKKHATVMI…ERIARTKGFL (217 aa).

This sequence belongs to the radical SAM superfamily. Lipoyl synthase family. Requires [4Fe-4S] cluster as cofactor.

The protein localises to the cytoplasm. It carries out the reaction [[Fe-S] cluster scaffold protein carrying a second [4Fe-4S](2+) cluster] + N(6)-octanoyl-L-lysyl-[protein] + 2 oxidized [2Fe-2S]-[ferredoxin] + 2 S-adenosyl-L-methionine + 4 H(+) = [[Fe-S] cluster scaffold protein] + N(6)-[(R)-dihydrolipoyl]-L-lysyl-[protein] + 4 Fe(3+) + 2 hydrogen sulfide + 2 5'-deoxyadenosine + 2 L-methionine + 2 reduced [2Fe-2S]-[ferredoxin]. It functions in the pathway protein modification; protein lipoylation via endogenous pathway; protein N(6)-(lipoyl)lysine from octanoyl-[acyl-carrier-protein]: step 2/2. Catalyzes the radical-mediated insertion of two sulfur atoms into the C-6 and C-8 positions of the octanoyl moiety bound to the lipoyl domains of lipoate-dependent enzymes, thereby converting the octanoylated domains into lipoylated derivatives. The chain is Lipoyl synthase from Rickettsia felis (strain ATCC VR-1525 / URRWXCal2) (Rickettsia azadi).